We begin with the raw amino-acid sequence, 425 residues long: 2-oxoglutarate and iron-dependent oxygenase JMJD4 homolog (425 aa).

The 152-residue stretch at 165 to 316 (AAQMPGYNFY…MVWQNLKNNL (152 aa)) folds into the JmjC domain. Residues His-212, Asp-214, and His-284 each coordinate Fe cation.

This sequence belongs to the JMJD6 family. The cofactor is Fe(2+).

The protein resides in the nucleus. Its subcellular location is the cytoplasm. It carries out the reaction L-lysyl-[protein] + 2-oxoglutarate + O2 = 4-hydroxy-L-lysyl-[protein] + succinate + CO2. Functionally, catalyzes the 2-oxoglutarate and iron-dependent C4-lysyl hydroxylation of eRF1 thereby promoting the translational termination efficiency of eRF1. May be involved in regulation of chromatin structure, promoting expansion of heterochromatin. This is 2-oxoglutarate and iron-dependent oxygenase JMJD4 homolog from Drosophila melanogaster (Fruit fly).